The chain runs to 351 residues: MEGAALLKIFVVCIWVQQNHPGWTVAGQFQEKKRFTEEVIEYFQKKVSPVHLKILLTSDEAWKRFVRVAELPREEADALYEALKNLTPYVAIEDKDMQQKEQQFREWFLKEFPQIRWKIQESIERLRVIANEIEKVHRGCVIANVVSGSTGILSVIGVMLAPFTAGLSLSITAAGVGLGIASATAGIASSIVENTYTRSAELTASRLTATSTDQLEALRDILRDITPNVLSFALDFDEATKMIANDVHTLRRSKATVGRPLIAWRYVPINVVETLRTRGAPTRIVRKVARNLGKATSGVLVVLDVVNLVQDSLDLHKGAKSESAESLRQWAQELEENLNELTHIHQSLKAG.

The signal sequence occupies residues 1–21; that stretch reads MEGAALLKIFVVCIWVQQNHP.

Belongs to the apolipoprotein L family. Widely expressed; the highest levels are in spinal cord, placenta, adrenal gland; also detected in spleen, bone marrow, uterus, trachea, mammary gland and testis; levels are low in brain, heart and pancreas.

The protein resides in the secreted. In terms of biological role, may play a role in lipid exchange and transport throughout the body. May participate in reverse cholesterol transport from peripheral cells to the liver. This is Apolipoprotein L4 (APOL4) from Homo sapiens (Human).